The following is a 91-amino-acid chain: Cytochrome b-c1 complex subunit 6, mitochondrial (91 aa).

The span at 1–10 (MGLEDERKML) shows a compositional bias: basic and acidic residues. The transit peptide at 1 to 13 (MGLEDERKMLTES) directs the protein to the mitochondrion. The interval 1–30 (MGLEDERKMLTESGDPEKEEEEEEELVDPL) is disordered. The span at 17–27 (EKEEEEEEELV) shows a compositional bias: acidic residues. 2 disulfides stabilise this stretch: cysteine 37–cysteine 81 and cysteine 53–cysteine 67. Lysine 42 bears the N6-acetyllysine mark. An N6-acetyllysine modification is found at lysine 85.

Belongs to the UQCRH/QCR6 family. In terms of assembly, component of the ubiquinol-cytochrome c oxidoreductase (cytochrome b-c1 complex, complex III, CIII), a multisubunit enzyme composed of 11 subunits. The complex is composed of 3 respiratory subunits cytochrome b, cytochrome c1 and Rieske protein UQCRFS1, 2 core protein subunits UQCRC1/QCR1 and UQCRC2/QCR2, and 6 low-molecular weight protein subunits UQCRH/QCR6, UQCRB/QCR7, UQCRQ/QCR8, UQCR10/QCR9, UQCR11/QCR10 and subunit 9, the cleavage product of Rieske protein UQCRFS1. The complex exists as an obligatory dimer and forms supercomplexes (SCs) in the inner mitochondrial membrane with NADH-ubiquinone oxidoreductase (complex I, CI) and cytochrome c oxidase (complex IV, CIV), resulting in different assemblies (supercomplex SCI(1)III(2)IV(1) and megacomplex MCI(2)III(2)IV(2)).

It localises to the mitochondrion inner membrane. Functionally, component of the ubiquinol-cytochrome c oxidoreductase, a multisubunit transmembrane complex that is part of the mitochondrial electron transport chain which drives oxidative phosphorylation. The respiratory chain contains 3 multisubunit complexes succinate dehydrogenase (complex II, CII), ubiquinol-cytochrome c oxidoreductase (cytochrome b-c1 complex, complex III, CIII) and cytochrome c oxidase (complex IV, CIV), that cooperate to transfer electrons derived from NADH and succinate to molecular oxygen, creating an electrochemical gradient over the inner membrane that drives transmembrane transport and the ATP synthase. The cytochrome b-c1 complex catalyzes electron transfer from ubiquinol to cytochrome c, linking this redox reaction to translocation of protons across the mitochondrial inner membrane, with protons being carried across the membrane as hydrogens on the quinol. In the process called Q cycle, 2 protons are consumed from the matrix, 4 protons are released into the intermembrane space and 2 electrons are passed to cytochrome c. In Macaca fascicularis (Crab-eating macaque), this protein is Cytochrome b-c1 complex subunit 6, mitochondrial (UQCRH).